The chain runs to 70 residues: DNA-directed RNA polymerase subunit omega (70 aa).

The protein belongs to the RNA polymerase subunit omega family. The RNAP catalytic core consists of 2 alpha, 1 beta, 1 beta' and 1 omega subunit. When a sigma factor is associated with the core the holoenzyme is formed, which can initiate transcription.

The catalysed reaction is RNA(n) + a ribonucleoside 5'-triphosphate = RNA(n+1) + diphosphate. Its function is as follows. Promotes RNA polymerase assembly. Latches the N- and C-terminal regions of the beta' subunit thereby facilitating its interaction with the beta and alpha subunits. This is DNA-directed RNA polymerase subunit omega from Staphylococcus saprophyticus subsp. saprophyticus (strain ATCC 15305 / DSM 20229 / NCIMB 8711 / NCTC 7292 / S-41).